The primary structure comprises 79 residues: Sulfur carrier protein TusA (79 aa).

Cys17 acts as the Cysteine persulfide intermediate in catalysis.

Belongs to the sulfur carrier protein TusA family.

The protein localises to the cytoplasm. Functionally, sulfur carrier protein which probably makes part of a sulfur-relay system. This Haemophilus ducreyi (strain 35000HP / ATCC 700724) protein is Sulfur carrier protein TusA.